The primary structure comprises 331 residues: Vitamin B12 import system permease protein BtuC (331 aa).

The next 7 helical transmembrane spans lie at leucine 21 to isoleucine 43, proline 63 to valine 85, leucine 90 to leucine 112, leucine 116 to leucine 138, leucine 151 to threonine 173, tryptophan 193 to serine 210, and valine 239 to isoleucine 261.

Belongs to the binding-protein-dependent transport system permease family. FecCD subfamily. As to quaternary structure, the complex is composed of two ATP-binding proteins (BtuD), two transmembrane proteins (BtuC) and a solute-binding protein (BtuF).

The protein resides in the cell inner membrane. Part of the ABC transporter complex BtuCDF involved in vitamin B12 import. Involved in the translocation of the substrate across the membrane. This chain is Vitamin B12 import system permease protein BtuC, found in Pectobacterium atrosepticum (strain SCRI 1043 / ATCC BAA-672) (Erwinia carotovora subsp. atroseptica).